The sequence spans 224 residues: Glycerol-3-phosphate acyltransferase (224 aa).

Helical transmembrane passes span 4–24 (FVIV…GSIN), 60–80 (LVIF…VYFV), 88–108 (SVVV…FPIW), 124–144 (IISV…LIII), 149–169 (IVSF…FIPW), and 182–202 (WPWW…IWSH).

Belongs to the PlsY family. Probably interacts with PlsX.

It is found in the cell membrane. The enzyme catalyses an acyl phosphate + sn-glycerol 3-phosphate = a 1-acyl-sn-glycero-3-phosphate + phosphate. It functions in the pathway lipid metabolism; phospholipid metabolism. Catalyzes the transfer of an acyl group from acyl-phosphate (acyl-PO(4)) to glycerol-3-phosphate (G3P) to form lysophosphatidic acid (LPA). This enzyme utilizes acyl-phosphate as fatty acyl donor, but not acyl-CoA or acyl-ACP. This chain is Glycerol-3-phosphate acyltransferase, found in Mycoplasmopsis pulmonis (strain UAB CTIP) (Mycoplasma pulmonis).